We begin with the raw amino-acid sequence, 252 residues long: MAMTPQLAFSRMPPGFRFQPTDEQLVVDYLQRRTAAQPCVTPDITDIDVYNVDPWQLPAMAMYGSDHDRYFFTMAAREAQARRTTPSGFWKPTGTKKTIFVVAGGHEVPTAVKRRFVFYLGHHQPSGSSNNNKTSWIMHEYRLMNSPRAAVPSSSSVNRLPTDDLTEEMVLCRISNKDLPKPPFIHNGLLQFSSVGLNGDGYNYLILDHLEPPAMEYPNVDIGNVDDAAAADDDPGDLDEEIDDSMQRNHGG.

One can recognise an NAC domain in the interval 12-177 (MPPGFRFQPT…EMVLCRISNK (166 aa)). The DNA-binding element occupies 110–183 (TAVKRRFVFY…ISNKDLPKPP (74 aa)). Positions 225-252 (VDDAAAADDDPGDLDEEIDDSMQRNHGG) are disordered. Residues 229–244 (AAADDDPGDLDEEIDD) are compositionally biased toward acidic residues.

As to quaternary structure, forms heterodimers with NAC26. Expressed in stems and panicles. Expressed in developing seeds.

Its subcellular location is the nucleus. It is found in the cytoplasm. Its function is as follows. Transcription factor involved in the regulation of seed size. Possesses transactivation activity in yeast. The sequence is that of NAC domain-containing protein 23 from Oryza sativa subsp. indica (Rice).